We begin with the raw amino-acid sequence, 314 residues long: Regulator of microtubule dynamics protein 1 (314 aa).

Lys-165 is modified (N6-succinyllysine). TPR repeat units lie at residues 168-204 and 222-258; these read AICL…NPKD and PWYQ…DPNF.

This sequence belongs to the RMDN family. Interacts with microtubules.

The protein localises to the cytoplasm. The protein resides in the cytoskeleton. It localises to the spindle. Its subcellular location is the spindle pole. This Pongo abelii (Sumatran orangutan) protein is Regulator of microtubule dynamics protein 1 (RMDN1).